A 396-amino-acid chain; its full sequence is MNFNKKTIEDIQVKGKKVLVRCDFNVPLKDGVITDENRLNGALPTIKYLVENGAKVILCSHMGKPKGEPKPELSLAPVAKRLSELLGKEIKFAPDNTVVGENAKAAVAEMKDGDVVLLENTRYRKEETKNGEEFSKELASLAEIFVNDAFGTAHRAHCSTVGVTDYIDTAVCGYLIQKELKFLGNAVETPEKPFVAILGGAKVSDKIAVINNLLDKVDTIIIGGGMAYTFLKAQGYEIGTSLVEEDRLDYAKEMIAKAEEKSVKFLLPVDHRVAAEFKDVEATVTNDQNIPTGNMGLDIGPKTETVYANAIKDAKTVIWNGPMGVFEFENFNKGTIAVAKAMADSNATTIIGGGDSAAAVNILGFGDKMTHISTGGGASLEFLEGKVLPGISALND.

Residues 23–25 (DFN), Arg38, 61–64 (HMGK), Arg122, and Arg155 contribute to the substrate site. Residues Lys206, Gly296, Glu327, and 353 to 356 (GGDS) each bind ATP.

Belongs to the phosphoglycerate kinase family. As to quaternary structure, monomer.

It localises to the cytoplasm. It carries out the reaction (2R)-3-phosphoglycerate + ATP = (2R)-3-phospho-glyceroyl phosphate + ADP. It participates in carbohydrate degradation; glycolysis; pyruvate from D-glyceraldehyde 3-phosphate: step 2/5. The protein is Phosphoglycerate kinase of Clostridium botulinum (strain Eklund 17B / Type B).